The following is a 477-amino-acid chain: Probable cytosolic Fe-S cluster assembly factor GG21400 (477 aa).

[4Fe-4S] cluster contacts are provided by Cys-23, Cys-68, Cys-71, Cys-74, Cys-187, Cys-243, Cys-395, and Cys-399.

This sequence belongs to the NARF family.

Functionally, component of the cytosolic iron-sulfur (Fe/S) protein assembly machinery. Required for maturation of extramitochondrial Fe/S proteins. This Drosophila erecta (Fruit fly) protein is Probable cytosolic Fe-S cluster assembly factor GG21400.